The sequence spans 118 residues: Beta-2-microglobulin (118 aa).

The N-terminal stretch at 1–20 is a signal peptide; the sequence is MARFVALVLLGLLSLSGLDA. One can recognise an Ig-like C1-type domain in the interval 25-112; the sequence is PKIQVYSRHP…HVTLEQPRIV (88 aa). A disulfide bridge links Cys-45 with Cys-99.

Belongs to the beta-2-microglobulin family. In terms of assembly, heterodimer of an alpha chain and a beta chain. Beta-2-microglobulin is the beta-chain of major histocompatibility complex class I molecules. Forms a heterotrimer with MR1 and a metabolite antigen.

The protein resides in the secreted. In terms of biological role, component of the class I major histocompatibility complex (MHC). Involved in the presentation of peptide antigens to the immune system. The chain is Beta-2-microglobulin (B2M) from Bos taurus (Bovine).